The primary structure comprises 377 residues: Tyrosine-protein phosphatase 2 (377 aa).

One can recognise a Tyrosine-protein phosphatase domain in the interval 27–347 (IDKEFNFILQ…RFCYLAISEA (321 aa)). Residues 77–137 (IDDDDDDEDD…EDHGGSGDEG (61 aa)) are disordered. The segment covering 78–91 (DDDDDDEDDNEDDI) has biased composition (acidic residues). A compositionally biased stretch (low complexity) spans 92-102 (IVSNNNNNNNN). The span at 113-123 (GSSGQSDVMSN) shows a compositional bias: polar residues. Catalysis depends on Cys281, which acts as the Phosphocysteine intermediate.

This sequence belongs to the protein-tyrosine phosphatase family. Non-receptor class subfamily.

The catalysed reaction is O-phospho-L-tyrosyl-[protein] + H2O = L-tyrosyl-[protein] + phosphate. This Dictyostelium discoideum (Social amoeba) protein is Tyrosine-protein phosphatase 2 (ptpB).